Here is a 278-residue protein sequence, read N- to C-terminus: Envelope glycoprotein L (278 aa).

Residues 1–30 form the signal peptide; that stretch reads MCRRPDCGFSFSPGPVVLLWCCLLLPIVSS. One can recognise a gL betaherpesvirus-type domain in the interval 43-256; the sequence is VPAECPELTR…DKYYAGLPPE (214 aa). The cysteines at positions 154 and 159 are disulfide-linked.

The protein belongs to the herpesviridae glycoprotein L (gL) family. Betaherpesvirinae gL subfamily. As to quaternary structure, interacts with glycoprotein H (gH); this interaction is necessary for the correct processing and cell surface expression of gH. Forms the envelope pentamer complex (PC) composed of gH, gL, UL128, UL130, and UL131A. The pentamer interacts with host NRP2. Forms the envelope trimer complex composed of gH, gL, and gO. The trimer interacts with host PDGFRA.

The protein resides in the virion membrane. Its subcellular location is the host cell membrane. It localises to the host Golgi apparatus. It is found in the host trans-Golgi network. In terms of biological role, the heterodimer glycoprotein H-glycoprotein L is required for the fusion of viral and plasma membranes leading to virus entry into the host cell. Acts as a functional inhibitor of gH and maintains gH in an inhibited form. Upon binding to host integrins, gL dissociates from gH leading to activation of the viral fusion glycoproteins gB and gH. In human cytomegalovirus, forms two distincts complexes to mediate viral entry, a trimer and a pentamer at the surface of the virion envelope. The gH-gL-gO trimer is required for infection in fibroblasts by interacting with host PDGFRA. The gH-gL-UL128-UL130-UL131A pentamer is essential for viral entry in epithelial, endothelial and myeloid cells via interaction with host NRP2. The chain is Envelope glycoprotein L from Human cytomegalovirus (strain AD169) (HHV-5).